We begin with the raw amino-acid sequence, 493 residues long: Cytoplasmic tRNA 2-thiolation protein 2 (493 aa).

Ser489 is modified (phosphoserine).

Belongs to the CTU2/NCS2 family. Interacts with NCS6 and URM1. May act by forming a heterodimer with NCS6.

The protein resides in the cytoplasm. Its pathway is tRNA modification; 5-methoxycarbonylmethyl-2-thiouridine-tRNA biosynthesis. In terms of biological role, plays a central role in 2-thiolation of mcm(5)S(2)U at tRNA wobble positions of tRNA(Lys), tRNA(Glu) and tRNA(Gln). May act by forming a heterodimer with NCS6 that ligates sulfur from thiocarboxylated URM1 onto the uridine of tRNAs at wobble position. Prior mcm(5) tRNA modification by the elongator complex is required for 2-thiolation. May also be involved in protein urmylation. The polypeptide is Cytoplasmic tRNA 2-thiolation protein 2 (Saccharomyces cerevisiae (strain YJM789) (Baker's yeast)).